The primary structure comprises 558 residues: Ubiquitin carboxyl-terminal hydrolase 30 homolog (558 aa).

The helical transmembrane segment at 6-26 (ILMAAGVTVAAVVGAFVFWGP) threads the bilayer. The USP domain occupies 39 to 550 (AGLHNFGLTC…PAYLLFYDRG (512 aa)). The active-site Nucleophile is Cys48. The interval 267–300 (LATPMLGGERSSRPRLPQSQQQQDEGLNRRVSSS) is disordered. Residues 280-289 (PRLPQSQQQQ) are compositionally biased toward low complexity. His506 (proton acceptor) is an active-site residue.

This sequence belongs to the peptidase C19 family.

Its subcellular location is the mitochondrion outer membrane. It catalyses the reaction Thiol-dependent hydrolysis of ester, thioester, amide, peptide and isopeptide bonds formed by the C-terminal Gly of ubiquitin (a 76-residue protein attached to proteins as an intracellular targeting signal).. Functionally, deubiquitinating enzyme that acts as a key inhibitor of mitophagy by counteracting the action of parkin (park). The protein is Ubiquitin carboxyl-terminal hydrolase 30 homolog of Drosophila melanogaster (Fruit fly).